Consider the following 559-residue polypeptide: Frizzled-5 (559 aa).

An N-terminal signal peptide occupies residues 1 to 26 (MGSFRSGVFALSFVVLLLDYFAPAQA). Residues 27–220 (ASKAIVCQEI…QPYFTQDEKM (194 aa)) lie on the Extracellular side of the membrane. Positions 28-149 (SKAIVCQEIT…GDPDTLCMYY (122 aa)) constitute an FZ domain. 5 disulfide bridges follow: C33-C94, C41-C87, C78-C116, C105-C146, and C109-C133. An N-linked (GlcNAc...) asparagine glycan is attached at N47. N150 carries an N-linked (GlcNAc...) asparagine glycan. The chain crosses the membrane as a helical span at residues 221–241 (FVTFWIGLWSILCFISTFTTV). The Cytoplasmic segment spans residues 242–257 (ATFLIDMERFRYPERP). A helical membrane pass occupies residues 258-278 (IIFLSACYLFVSIGYVVRLIV). Over 279 to 301 (GHENVACNKDHIHYETTGPALCT) the chain is Extracellular. A helical transmembrane segment spans residues 302 to 322 (IVFLLIYFFGMASSIWWVILT). At 323–343 (FTWFLAAGMKWGNEAIASYSQ) the chain is on the cytoplasmic side. The chain crosses the membrane as a helical span at residues 344 to 364 (YFHMAAWLIPSVKSIAVLALS). Topologically, residues 365–387 (SVDGDPVAGICYVGNQNLDNLRG) are extracellular. A helical transmembrane segment spans residues 388 to 408 (FVLAPLVVYLFSGTMFLLAGF). Topologically, residues 409–434 (VSLFRIRSVIKQGGTKTDKLEKLMIR) are cytoplasmic. Residues 435-455 (IGIFSVLYTVPATIVVACYIY) traverse the membrane as a helical segment. The Extracellular portion of the chain corresponds to 456–483 (EQHYREHWEKTHNCSCPGDKQRYRPDYA). The N-linked (GlcNAc...) asparagine glycan is linked to N468. A helical transmembrane segment spans residues 484–504 (VFMLKYLMCLVVGITSGVWIW). Topologically, residues 505–559 (SGKTLESWKRFTGRCCRNSKPINASAYSEASRALTPRTGLSNLTLPHKQVPLSHV) are cytoplasmic. Positions 507-512 (KTLESW) match the Lys-Thr-X-X-X-Trp motif, mediates interaction with the PDZ domain of Dvl family members motif. The PDZ-binding motif lies at 557 to 559 (SHV).

Belongs to the G-protein coupled receptor Fz/Smo family. As to expression, expressed in retina.

It is found in the cell membrane. Its subcellular location is the golgi apparatus membrane. Receptor for Wnt proteins that functions in the canonical Wnt/beta-catenin signaling pathway. The canonical Wnt/beta-catenin signaling pathway leads to the activation of disheveled proteins, inhibition of GSK-3 kinase, nuclear accumulation of beta-catenin and activation of Wnt target genes. A second signaling pathway involving PKC and calcium fluxes has been seen for some family members, but it is not yet clear if it represents a distinct pathway or if it can be integrated in the canonical pathway, as PKC seems to be required for Wnt-mediated inactivation of GSK-3 kinase. Both pathways seem to involve interactions with G-proteins. May be involved in transduction and intercellular transmission of polarity information during tissue morphogenesis and/or in differentiated tissues. This is Frizzled-5 (fzd5) from Xenopus laevis (African clawed frog).